A 177-amino-acid polypeptide reads, in one-letter code: NADH-quinone oxidoreductase subunit B (177 aa).

Positions 56, 57, 121, and 151 each coordinate [4Fe-4S] cluster.

Belongs to the complex I 20 kDa subunit family. As to quaternary structure, NDH-1 is composed of 14 different subunits. Subunits NuoB, C, D, E, F, and G constitute the peripheral sector of the complex. Requires [4Fe-4S] cluster as cofactor.

The protein resides in the cell inner membrane. The catalysed reaction is a quinone + NADH + 5 H(+)(in) = a quinol + NAD(+) + 4 H(+)(out). Its function is as follows. NDH-1 shuttles electrons from NADH, via FMN and iron-sulfur (Fe-S) centers, to quinones in the respiratory chain. Couples the redox reaction to proton translocation (for every two electrons transferred, four hydrogen ions are translocated across the cytoplasmic membrane), and thus conserves the redox energy in a proton gradient. This Roseobacter denitrificans (strain ATCC 33942 / OCh 114) (Erythrobacter sp. (strain OCh 114)) protein is NADH-quinone oxidoreductase subunit B.